The primary structure comprises 574 residues: Putative diflavin flavoprotein A 3 (574 aa).

The segment at 43–236 (QNGTTYNSFL…PSVKMIATGH (194 aa)) is zinc metallo-hydrolase. Positions 92, 94, 96, 159, 178, and 236 each coordinate Fe cation. The region spanning 265–409 (IGVFYVSEYG…DLGQWVTRDR (145 aa)) is the Flavodoxin-like domain. The flavodoxin-reductase-like stretch occupies residues 410–574 (SIKAMKSLGA…VHHRKVGNHY (165 aa)).

The protein in the N-terminal section; belongs to the zinc metallo-hydrolase group 3 family. This sequence in the C-terminal section; belongs to the flavodoxin reductase family. Requires Fe cation as cofactor.

Functionally, mediates electron transfer from NADH to oxygen, reducing it to water. This modular protein has 3 redox cofactors, in other organisms the same activity requires 2 or 3 proteins. The polypeptide is Putative diflavin flavoprotein A 3 (dfa3) (Nostoc sp. (strain PCC 7120 / SAG 25.82 / UTEX 2576)).